Consider the following 226-residue polypeptide: uncharacterized protein (226 aa).

Residues 121 to 141 (YLIGNIIGLPLTIPFILIPLI) form a helical membrane-spanning segment.

The protein to yeast YDL183c.

It is found in the membrane. This is an uncharacterized protein from Schizosaccharomyces pombe (strain 972 / ATCC 24843) (Fission yeast).